The primary structure comprises 565 residues: NAD-dependent malic enzyme (565 aa).

Tyrosine 104 acts as the Proton donor in catalysis. Residue arginine 157 participates in NAD(+) binding. The Proton acceptor role is filled by lysine 175. The a divalent metal cation site is built by glutamate 246, aspartate 247, and aspartate 270. Positions 270 and 418 each coordinate NAD(+).

It belongs to the malic enzymes family. Homotetramer. Mg(2+) serves as cofactor. The cofactor is Mn(2+).

The catalysed reaction is (S)-malate + NAD(+) = pyruvate + CO2 + NADH. It carries out the reaction oxaloacetate + H(+) = pyruvate + CO2. The protein is NAD-dependent malic enzyme of Klebsiella pneumoniae (strain 342).